The primary structure comprises 339 residues: Cathepsin L (339 aa).

The N-terminal stretch at 1 to 17 (MRTVLVALLALVALTQA) is a signal peptide. A propeptide spans 18–121 (ISPLDLIKEE…ATYIPPAHVT (104 aa)) (activation peptide). Asn-96 carries N-linked (GlcNAc...) asparagine glycosylation. Disulfide bonds link Cys-143/Cys-186, Cys-177/Cys-219, and Cys-278/Cys-328. Cys-146 is an active-site residue. The active site involves His-285. Positions 295–298 (DESG) are excised as a propeptide. Asn-306 is a catalytic residue.

The protein belongs to the peptidase C1 family. As to quaternary structure, dimer of a heavy and a light chain linked by disulfide bonds.

Its subcellular location is the lysosome. It carries out the reaction Specificity close to that of papain. As compared to cathepsin B, cathepsin L exhibits higher activity toward protein substrates, but has little activity on Z-Arg-Arg-NHMec, and no peptidyl-dipeptidase activity.. Its function is as follows. Important for the overall degradation of proteins in lysosomes. Required for differentiation of imaginal disks. The chain is Cathepsin L from Sarcophaga peregrina (Flesh fly).